The following is a 351-amino-acid chain: DNA-directed RNA polymerase subunit alpha (351 aa).

The interval 1–245 is alpha N-terminal domain (alpha-NTD); that stretch reads MPRRNLLKGF…EHFTVFVNFD (245 aa). Residues 261 to 351 form an alpha C-terminal domain (alpha-CTD) region; the sequence is AVLELLNTKI…MRQKEEIDEA (91 aa).

Belongs to the RNA polymerase alpha chain family. As to quaternary structure, homodimer. The RNAP catalytic core consists of 2 alpha, 1 beta, 1 beta' and 1 omega subunit. When a sigma factor is associated with the core the holoenzyme is formed, which can initiate transcription.

The enzyme catalyses RNA(n) + a ribonucleoside 5'-triphosphate = RNA(n+1) + diphosphate. Its function is as follows. DNA-dependent RNA polymerase catalyzes the transcription of DNA into RNA using the four ribonucleoside triphosphates as substrates. This chain is DNA-directed RNA polymerase subunit alpha, found in Treponema pallidum (strain Nichols).